The primary structure comprises 247 residues: MTEVSMSLTGHLKELRTRLLIILLSFFLAFFVGLFVSKPLILFLQKDDLPKEVILHVFKVTDAFQIYIEMAFIIGLILVFPVILYQLWAFVKPGLHASEQRITLRYIPITFLLFLCGVVFSYVITFPFILKFMFQFAAELGVETTIGLATYFQFLLQIVLSFGVLFELPMVIMLLTRLSLITPNGMRRARKYAYFCLLIIAAFIAPPEILSHLMITIPLIGLYEISIVVSGFTVRRMDKEMNMKKML.

Helical transmembrane passes span Ile-21–Ile-41, Ala-71–Val-91, Ile-109–Ile-129, Phe-154–Leu-174, and Phe-195–Ile-215.

Belongs to the TatC family. In terms of assembly, forms a complex with TatA.

It localises to the cell membrane. Its function is as follows. Part of the twin-arginine translocation (Tat) system that transports large folded proteins containing a characteristic twin-arginine motif in their signal peptide across membranes. This is Sec-independent protein translocase protein TatC from Listeria innocua serovar 6a (strain ATCC BAA-680 / CLIP 11262).